A 437-amino-acid polypeptide reads, in one-letter code: Histidine--tRNA ligase (437 aa).

Belongs to the class-II aminoacyl-tRNA synthetase family. As to quaternary structure, homodimer.

The protein resides in the cytoplasm. The enzyme catalyses tRNA(His) + L-histidine + ATP = L-histidyl-tRNA(His) + AMP + diphosphate + H(+). The chain is Histidine--tRNA ligase from Leptospira biflexa serovar Patoc (strain Patoc 1 / Ames).